A 146-amino-acid polypeptide reads, in one-letter code: Hemoglobin subunit beta-1 (146 aa).

Ser1 carries the post-translational modification N-acetylserine. The Globin domain occupies Phe2–His146. Position 17 is an N6-succinyllysine (Lys17). 2 positions are modified to phosphoserine: Ser44 and Ser50. Lys59 carries the post-translational modification N6-succinyllysine. Heme b-binding residues include His63 and His92. Arg104 carries the post-translational modification Asymmetric dimethylarginine.

Belongs to the globin family. Heterotetramer of two alpha chains and two beta chains. As to expression, red blood cells.

Involved in oxygen transport from the lung to the various peripheral tissues. The chain is Hemoglobin subunit beta-1 (HBB1) from Panthera leo (Lion).